A 389-amino-acid chain; its full sequence is MSTQKKTINFLQEFSIPLILGVLIALVWANLAPENYHHFVHNEIIGHISLHFFVNDIFMVFFFAMAAIEITQSLLPGGSLNPLKRAINPLMATLGGVLGPALVFLGLNALIGSPEFARGWGIPTATDIALAWLVARVVFGAQHAAVSFLLLLAIVDDGIGLMIIAFFYPDPANPVAPLWLLLTVAGMLVAYLLRRKNVQSYWPYIILGGILSWAGLYLAHIHPALALVFIVPFLPHPPREEFGLFEDDPQDHSTLKTFEHEWKIFVDFGLLLFGLTNAGVEFSEINTLTWLVLIALVGGKTIGIFLMGSLATVIGFPFPKGMGYKELLVAGVIAAMGLTVALFVSGVAFIDPGLQGAAKMGALFSAVAAVIAFALGKVLGIKKVKDTQA.

Transmembrane regions (helical) follow at residues 8-28 (INFL…ALVW), 48-68 (ISLH…MAAI), 91-111 (MATL…NALI), 119-139 (GWGI…RVVF), 173-193 (NPVA…AYLL), 214-234 (AGLY…VPFL), 262-282 (WKIF…GVEF), 288-308 (LTWL…FLMG), 327-347 (LLVA…VSGV), and 361-381 (GALF…VLGI).

This sequence belongs to the NhaA Na(+)/H(+) (TC 2.A.33) antiporter family.

It is found in the cell membrane. It carries out the reaction Na(+)(in) + 2 H(+)(out) = Na(+)(out) + 2 H(+)(in). Functionally, na(+)/H(+) antiporter that extrudes sodium in exchange for external protons. This is Na(+)/H(+) antiporter NhaA from Desulfitobacterium hafniense (strain DSM 10664 / DCB-2).